We begin with the raw amino-acid sequence, 1757 residues long: E3 ubiquitin-protein ligase UBR1 (1757 aa).

Positions Met-1 to Arg-24 are disordered. The residue at position 2 (Ala-2) is an N-acetylalanine. The segment at Gln-97–Pro-168 adopts a UBR-type zinc-finger fold. The Zn(2+) site is built by Cys-99, Cys-112, Cys-115, Cys-124, Cys-127, His-133, and His-136. Phe-148 serves as a coordination point for a peptide. Zn(2+) is bound at residue Cys-149. Asp-150 contacts a peptide. Cys-151 is a binding site for Zn(2+). Asp-153 is an a peptide binding site. Zn(2+)-binding residues include Cys-163 and His-166. Residues Gln-842–Pro-868 are disordered. The tract at residues Arg-1022–Asn-1057 is UBC2-binding region (U2BR). Residues Cys-1101, Cys-1104, Cys-1162, His-1164, His-1167, and Cys-1170 each contribute to the Zn(2+) site. The RING-type; atypical zinc finger occupies Cys-1101–Lys-1204. Phosphoserine is present on Ser-1182. Zn(2+) contacts are provided by Cys-1200, Cys-1203, Cys-1635, Cys-1638, and Cys-1661.

It belongs to the E3 ubiquitin-protein ligase UBR1-like family. Interacts with RECQL4. As to expression, present in skeletal muscle and liver (at protein level). Broadly expressed, with highest levels in skeletal muscle and heart. Expressed in acinar cells of the pancreas. In testes, expressed primarily in spermatogonia.

The protein resides in the cytoplasm. The protein localises to the cytosol. It catalyses the reaction S-ubiquitinyl-[E2 ubiquitin-conjugating enzyme]-L-cysteine + [acceptor protein]-L-lysine = [E2 ubiquitin-conjugating enzyme]-L-cysteine + N(6)-ubiquitinyl-[acceptor protein]-L-lysine.. The protein operates within protein modification; protein ubiquitination. In terms of biological role, E3 ubiquitin-protein ligase which is a component of the N-end rule pathway. Recognizes and binds proteins bearing specific N-terminal residues (N-degrons) that are destabilizing according to the N-end rule, leading to their ubiquitination and subsequent degradation. Recognizes both type-1 and type-2 N-degrons, containing positively charged amino acids (Arg, Lys and His) and bulky and hydrophobic amino acids, respectively. Does not ubiquitinate proteins that are acetylated at the N-terminus. In contrast, it strongly binds methylated N-degrons. Binds leucine and is a negative regulator of the leucine-mTOR signaling pathway, thereby controlling cell growth. This chain is E3 ubiquitin-protein ligase UBR1, found in Mus musculus (Mouse).